Here is a 516-residue protein sequence, read N- to C-terminus: Leucine-rich repeat transmembrane neuronal protein 2 (516 aa).

The N-terminal stretch at 1-33 is a signal peptide; that stretch reads MGLHFKWPLGAPMLAAIYAMSMVLKMLPALGMA. In terms of domain architecture, LRRNT spans 34–61; that stretch reads CPPKCRCEKLLFYCDSQGFHSVPNATDK. The Extracellular portion of the chain corresponds to 34–422; the sequence is CPPKCRCEKL…EPDNAIFTQR (389 aa). N-linked (GlcNAc...) asparagine glycosylation occurs at Asn-57. LRR repeat units lie at residues 63–83, 86–107, 110–131, 134–155, 158–179, 182–203, 206–227, 230–251, 254–275, and 278–299; these read SLGL…QFAS, QLTW…AFQG, KLKE…TFTQ, NLQN…LFYG, KLQT…LFWD, SLEF…GFAG, KLRE…HFLR, SLHT…MEWT, TLEK…VFET, and NLKI…ILNS. N-linked (GlcNAc...) asparagine glycosylation occurs at Asn-126. Residue Asn-243 is glycosylated (N-linked (GlcNAc...) asparagine). The region spanning 311–362 is the LRRCT domain; sequence NLWECSARICALASWLGSFQGRWEHSILCHSPDHTQGEDILDAVHGFQLCWN. N-linked (GlcNAc...) asparagine glycosylation is present at Asn-362. The helical transmembrane segment at 423–443 threads the bilayer; sequence VITGTMALLFSFFFIIFIVFI. Topologically, residues 444–516 are cytoplasmic; the sequence is SRKCCPPTLR…QQLPYKECEV (73 aa). Residues 513-516 carry the Involved in DLG4-binding motif; it reads ECEV.

Belongs to the LRRTM family. As to quaternary structure, interacts with DLG4. Interacts with neurexin NRXN1; interaction is mediated by heparan sulfate glycan modification on neurexin. In terms of tissue distribution, expressed in neuronal tissues.

Its subcellular location is the cell membrane. The protein localises to the postsynaptic cell membrane. In terms of biological role, involved in the development and maintenance of excitatory synapses in the vertebrate nervous system. Regulates surface expression of AMPA receptors and instructs the development of functional glutamate release sites. Acts as a ligand for the presynaptic receptors NRXN1-A and NRXN1-B. The sequence is that of Leucine-rich repeat transmembrane neuronal protein 2 (LRRTM2) from Homo sapiens (Human).